Here is a 72-residue protein sequence, read N- to C-terminus: Translation initiation factor IF-1 (72 aa).

In terms of domain architecture, S1-like spans 1 to 72; that stretch reads MAKEDCIEME…TKGRIKFRSK (72 aa).

Belongs to the IF-1 family. In terms of assembly, component of the 30S ribosomal translation pre-initiation complex which assembles on the 30S ribosome in the order IF-2 and IF-3, IF-1 and N-formylmethionyl-tRNA(fMet); mRNA recruitment can occur at any time during PIC assembly.

It is found in the cytoplasm. One of the essential components for the initiation of protein synthesis. Stabilizes the binding of IF-2 and IF-3 on the 30S subunit to which N-formylmethionyl-tRNA(fMet) subsequently binds. Helps modulate mRNA selection, yielding the 30S pre-initiation complex (PIC). Upon addition of the 50S ribosomal subunit IF-1, IF-2 and IF-3 are released leaving the mature 70S translation initiation complex. This is Translation initiation factor IF-1 from Francisella tularensis subsp. tularensis (strain FSC 198).